The following is a 409-amino-acid chain: MALLAQQLSRWFNSVKLSSFIKATQVTKHSAGLGKNASAQALLSSDTCFLQWGIKTDRALFSWSSFQSANTTRRKSSTNSTLLPSVSEQPEKIPRLESELPLEELDDLPPLSPLQPVSEEEAIQIAAYSPLPLSSSTLADYVDHSETLQKLVQLGVDLSKIEKHPDVANLLLRLNFEKDIKQILLFLKDLGLEDNQLGPFLTKNYAIFSEDLENLKTRVAYLQSKNFSKTDIACMVKNAPFLLSFSVERLDNRLGFFQKELELSVKKTRDLVVRLPRLLTGSLEPVKENMKVYRLELGFKHNEIQHMVTKIPKMLTANKRKLTETFDYVHNVMNIPHHIIVKFPQVFNTRVFKIKERHLFLAYLGKAQYDPAKPNYVSLDKFVSFPDEVFCKEIAKASVNDFEKFLKTL.

A mitochondrion-targeting transit peptide spans 1-64; sequence MALLAQQLSR…KTDRALFSWS (64 aa). Residues 74-93 form a disordered region; it reads RKSSTNSTLLPSVSEQPEKI.

This sequence belongs to the mTERF family.

It localises to the mitochondrion. Functionally, binds promoter DNA and regulates initiation of transcription. Required for normal mitochondrial transcription and translation, and for normal assembly of mitochondrial respiratory complexes. Required for normal mitochondrial function. Maintains 16S rRNA levels and functions in mitochondrial ribosome assembly by regulating the biogenesis of the 39S ribosomal subunit. The chain is Transcription termination factor 3, mitochondrial (Mterf3) from Rattus norvegicus (Rat).